A 757-amino-acid chain; its full sequence is Serine/threonine-protein phosphatase with EF-hands 2 (757 aa).

Residues 21-46 (KAAALIQRWYRRYMARLEMRRRCTWN) form the IQ domain. The interval 128–544 (ATALVEAFRL…PHIVQYQANK (417 aa)) is catalytic. 4 residues coordinate Mn(2+): D179, H181, D208, and N240. H241 serves as the catalytic Proton donor. H292 lines the Mn(2+) pocket. Residues 318–349 (CKTRKESENREEQKRKDNQTSSGQKPTPWFLP) are disordered. The span at 321 to 335 (RKESENREEQKRKDN) shows a compositional bias: basic and acidic residues. H492 lines the Mn(2+) pocket. 3 consecutive EF-hand domains span residues 572–607 (AHSS…VLHL), 656–691 (RNRS…FSSH), and 696–731 (ITDD…VEQS). 13 residues coordinate Ca(2+): D585, D587, S589, D596, D669, D671, S673, E680, D709, N711, D713, H715, and E720.

The protein belongs to the PPP phosphatase family. Requires Mn(2+) as cofactor. Detected in retina, more specifically in photoreceptors.

It catalyses the reaction O-phospho-L-seryl-[protein] + H2O = L-seryl-[protein] + phosphate. It carries out the reaction O-phospho-L-threonyl-[protein] + H2O = L-threonyl-[protein] + phosphate. Its activity is regulated as follows. Activated by calcium. Functionally, may play a role in phototransduction. May dephosphorylate photoactivated rhodopsin. May function as a calcium sensing regulator of ionic currents, energy production or synaptic transmission. The protein is Serine/threonine-protein phosphatase with EF-hands 2 (Ppef2) of Mus musculus (Mouse).